Consider the following 214-residue polypeptide: Putative ras-related protein Rab-5B (214 aa).

56 to 63 (GEMNTGKT) is a binding site for GTP. Positions 77–85 (TDSTIGAAF) match the Effector region motif. Residues 103–107 (DTAGQ) and 161–164 (NKVD) each bind GTP.

The protein belongs to the small GTPase superfamily. Rab family. In terms of processing, this sequence lacks the C-terminal cysteine motifs subject to isoprenylation in other Rab proteins.

The polypeptide is Putative ras-related protein Rab-5B (rab5B) (Dictyostelium discoideum (Social amoeba)).